A 177-amino-acid chain; its full sequence is MSRIGKKPVELPSGVSAAVSGQTIEVKGPKGARSFTATDDVTITVDGNVVSITPRGMSKRARQQWGMSRTMVANLVAGVTEGFKKELEITGVGYRANAQGNTLKLNLGYSHDVDFTVPAGVTVSTPKQTEIVVEGIDQQQVGEVAAKIREWRSPEPYKGKGIRYKGEFIFRKDGKKK.

Belongs to the universal ribosomal protein uL6 family. As to quaternary structure, part of the 50S ribosomal subunit.

Its function is as follows. This protein binds to the 23S rRNA, and is important in its secondary structure. It is located near the subunit interface in the base of the L7/L12 stalk, and near the tRNA binding site of the peptidyltransferase center. The sequence is that of Large ribosomal subunit protein uL6 from Ruegeria pomeroyi (strain ATCC 700808 / DSM 15171 / DSS-3) (Silicibacter pomeroyi).